The sequence spans 165 residues: ATP synthase subunit b (165 aa).

The helical transmembrane segment at Leu11–Trp31 threads the bilayer.

This sequence belongs to the ATPase B chain family. As to quaternary structure, F-type ATPases have 2 components, F(1) - the catalytic core - and F(0) - the membrane proton channel. F(1) has five subunits: alpha(3), beta(3), gamma(1), delta(1), epsilon(1). F(0) has three main subunits: a(1), b(2) and c(10-14). The alpha and beta chains form an alternating ring which encloses part of the gamma chain. F(1) is attached to F(0) by a central stalk formed by the gamma and epsilon chains, while a peripheral stalk is formed by the delta and b chains.

The protein localises to the cell membrane. F(1)F(0) ATP synthase produces ATP from ADP in the presence of a proton or sodium gradient. F-type ATPases consist of two structural domains, F(1) containing the extramembraneous catalytic core and F(0) containing the membrane proton channel, linked together by a central stalk and a peripheral stalk. During catalysis, ATP synthesis in the catalytic domain of F(1) is coupled via a rotary mechanism of the central stalk subunits to proton translocation. Its function is as follows. Component of the F(0) channel, it forms part of the peripheral stalk, linking F(1) to F(0). This Elusimicrobium minutum (strain Pei191) protein is ATP synthase subunit b.